Consider the following 395-residue polypeptide: F-box/kelch-repeat protein At4g39570 (395 aa).

Residues 1 to 25 (MSSPERKRKRVTSTKNPSVKKKKKI) are compositionally biased toward basic residues. The interval 1–29 (MSSPERKRKRVTSTKNPSVKKKKKISPVP) is disordered. The F-box domain maps to 29-75 (PTPIPSLPDDLLVSIFARVSRLYYPILSLVSKSFRSLLRSPELYETR). Kelch repeat units follow at residues 150 to 197 (DIYF…VIDG) and 198 to 246 (KIYV…RSAY).

The protein is F-box/kelch-repeat protein At4g39570 of Arabidopsis thaliana (Mouse-ear cress).